Reading from the N-terminus, the 253-residue chain is Short-chain dehydrogenase/reductase ATR9 (253 aa).

The NADP(+) site is built by Ser-15, Ser-16, Ile-18, Ser-38, Asn-39, Arg-42, Asp-65, and Lys-129. Ser-147 functions as the Proton donor in the catalytic mechanism. Thr-194 provides a ligand contact to NADP(+).

Belongs to the short-chain dehydrogenases/reductases (SDR) family.

It participates in mycotoxin biosynthesis. Functionally, short-chain dehydrogenase/reductase; part of the core atranone cluster (CAC) which products are predicted to catalyze most or all steps of mycotoxin atranone synthesis, starting from geranylgeranyl pyrophosphate (GGPP). The initial cyclization of GGPP to dolabellane is probably performed by the terpene cyclase ATR13. The Baeyer-Villiger oxidation near the end of the atranone synthesis, which converts atranones D and E to atranones F and G is predicted to be catalyzed by the monooxygenase ATR8. Of the CAC's other predicted gene products, the reducing PKS ATR6 might synthesize a polyketide chain. This polyketide is probably transferred onto the atranone backbone by the polyketide transferase ATR5. Other predicted CAC products include 4 oxygenases (ATR2, ATR3, ATR4, and ATR14), 3 short-chain reductases (ATR7, ATR9, and ATR10), and a methyltransferase (ATR12). These may all be involved in the various steps of atranone biosynthesis, although their specific roles must await experimental determination. The sequence is that of Short-chain dehydrogenase/reductase ATR9 from Stachybotrys chlorohalonatus (strain IBT 40285).